The sequence spans 105 residues: Thioredoxin (105 aa).

The Thioredoxin domain maps to 2-105 (VKQIESKYAF…KLEATINELI (104 aa)). Lys3 is subject to N6-acetyllysine. Lys8 bears the N6-succinyllysine mark. Active-site nucleophile residues include Cys32 and Cys35. Residues Cys32 and Cys35 are joined by a disulfide bond. Lys39 carries the N6-acetyllysine modification. An S-nitrosocysteine mark is found at Cys62 and Cys69. Position 73 is an S-nitrosocysteine; alternate (Cys73). Position 94 is an N6-acetyllysine; alternate (Lys94). Lys94 carries the post-translational modification N6-succinyllysine; alternate.

The protein belongs to the thioredoxin family. In terms of assembly, homodimer; disulfide-linked. Interacts with TXNIP through the redox-active site. Interacts with MAP3K5 and CASP3. Interacts with APEX1; the interaction stimulates the FOS/JUN AP-1 DNA-binding activity in a redox-dependent manner. In the fully reduced protein, both Cys-69 and Cys-73 are nitrosylated in response to nitric oxide (NO). When two disulfide bonds are present in the protein, only Cys-73 is nitrosylated. Cys-73 can serve as donor for nitrosylation of target proteins.

It localises to the nucleus. The protein resides in the cytoplasm. It is found in the secreted. Participates in various redox reactions through the reversible oxidation of its active center dithiol to a disulfide and catalyzes dithiol-disulfide exchange reactions. Plays a role in the reversible S-nitrosylation of cysteine residues in target proteins, and thereby contributes to the response to intracellular nitric oxide. Nitrosylates the active site Cys of CASP3 in response to nitric oxide (NO), and thereby inhibits caspase-3 activity. Induces the FOS/JUN AP-1 DNA binding activity in ionizing radiation (IR) cells through its oxidation/reduction status and stimulates AP-1 transcriptional activity. The protein is Thioredoxin (TXN) of Ovis aries (Sheep).